The following is a 95-amino-acid chain: Cliotide T5 (95 aa).

A cross-link (cyclopeptide (Gly-Asn)) is located at residues Gly1–Asn30. Disulfide bonds link Cys4–Cys20, Cys8–Cys22, and Cys13–Cys27. Positions His31–Asn95 are cleaved as a propeptide — removed in mature form.

In terms of processing, contains 3 disulfide bonds. Post-translationally, this is a cyclic peptide. In terms of tissue distribution, expressed in stem, shoot, root, leaf, pod and nodule but not in flower and seed (at protein level).

Probably participates in a plant defense mechanism. This chain is Cliotide T5, found in Clitoria ternatea (Butterfly pea).